The chain runs to 100 residues: ATP-dependent Clp protease adapter protein ClpS (100 aa).

It belongs to the ClpS family. In terms of assembly, binds to the N-terminal domain of the chaperone ClpA.

In terms of biological role, involved in the modulation of the specificity of the ClpAP-mediated ATP-dependent protein degradation. This chain is ATP-dependent Clp protease adapter protein ClpS, found in Neisseria meningitidis serogroup B (strain ATCC BAA-335 / MC58).